The primary structure comprises 705 residues: Polyribonucleotide nucleotidyltransferase (705 aa).

The Mg(2+) site is built by Asp486 and Asp492. Residues 553 to 612 (PRIYTMKINPEKIKDVIGKGGSVIRALTDETGTTIEIEDDGTIKIAATDGDKAKHAIRRI) form the KH domain. One can recognise an S1 motif domain in the interval 622–690 (GRIYAGKVTR…RQGRIRLSIK (69 aa)).

It belongs to the polyribonucleotide nucleotidyltransferase family. In terms of assembly, component of the RNA degradosome, which is a multiprotein complex involved in RNA processing and mRNA degradation. It depends on Mg(2+) as a cofactor.

It is found in the cytoplasm. The catalysed reaction is RNA(n+1) + phosphate = RNA(n) + a ribonucleoside 5'-diphosphate. In terms of biological role, involved in mRNA degradation. Catalyzes the phosphorolysis of single-stranded polyribonucleotides processively in the 3'- to 5'-direction. This is Polyribonucleotide nucleotidyltransferase from Yersinia pestis bv. Antiqua (strain Nepal516).